The following is a 209-amino-acid chain: Probable transcriptional regulator ycf29 (209 aa).

In terms of domain architecture, Response regulatory spans 4 to 120 (NLMLVENDTV…ELVSLIKNLI (117 aa)). 4-aspartylphosphate is present on Asp53. In terms of domain architecture, HTH luxR-type spans 139-204 (PLFQLLYLTP…LLVKYSIKNN (66 aa)).

The protein resides in the plastid. It localises to the chloroplast. The protein is Probable transcriptional regulator ycf29 (ycf29) of Porphyra purpurea (Red seaweed).